The primary structure comprises 164 residues: Methanogen homoaconitase small subunit 2 (164 aa).

The YLRT motif lies at 26 to 29 (YLRT).

This sequence belongs to the LeuD family. LeuD type 2 subfamily. As to quaternary structure, heterotetramer of 2 HacA and 2 HacB proteins. Cannot form a complex with LeuC.

It catalyses the reaction (2R)-homocitrate = (2R,3S)-homoisocitrate. The catalysed reaction is (2R)-homocitrate = cis-homoaconitate + H2O. The enzyme catalyses (2R,3S)-homoisocitrate = cis-homoaconitate + H2O. It carries out the reaction cis-(homo)2aconitate + H2O = (2R,3S)-iso(homo)2citrate. It catalyses the reaction cis-(homo)3aconitate + H2O = (2R,3S)-iso(homo)3citrate. It participates in organic acid metabolism; 2-oxosuberate biosynthesis. Component of a hydro-lyase with broad substrate specificity for cis-unsaturated tricarboxylic acids. Catalyzes both the reversible dehydration of (R)-homocitrate ((R)-2-hydroxybutane-1,2,4-tricarboxylate) to produce cis-homoaconitate ((Z)-but-1-ene-1,2,4-tricarboxylate), and its hydration to homoisocitrate ((1R,2S)-1-hydroxybutane-1,2,4-tricarboxylate). Is also able to hydrate the analogous longer chain substrates cis-homo(2)-aconitate, cis-homo(3)-aconitate. These reactions are part of the biosynthesis pathway of coenzyme B. The sequence is that of Methanogen homoaconitase small subunit 2 (hacB2) from Methanosarcina acetivorans (strain ATCC 35395 / DSM 2834 / JCM 12185 / C2A).